The sequence spans 355 residues: Green-sensitive opsin-1 (355 aa).

Over 1–49 the chain is Extracellular; it reads MAAHADEPVFAARRYNEETTRESAFVYTNANNTRDPFEGPNYHIAPRWV. An N-linked (GlcNAc...) asparagine glycan is attached at asparagine 31. The helical transmembrane segment at 50 to 74 threads the bilayer; sequence YNLASLWMIIVVIASIFTNSLVIVA. At 75–86 the chain is on the cytoplasmic side; the sequence is TAKFKKLRHPLN. Residues 87-112 traverse the membrane as a helical segment; sequence WILVNLAIADLGETVLASTISVFNQV. Topologically, residues 113 to 126 are extracellular; the sequence is FGYFVLGHPMCIFE. A disulfide bridge links cysteine 123 with cysteine 200. Residues 127–146 traverse the membrane as a helical segment; it reads GWTVSVCGITALWSLTIISW. Residues 147–165 lie on the Cytoplasmic side of the membrane; the sequence is ERWVVVCKPFGNVKFDGKW. Residues 166-189 traverse the membrane as a helical segment; sequence AAGGIIFAWTWAIIWCTPPIFGWS. The Extracellular segment spans residues 190 to 215; sequence RYWPHGLKTSCGPDVFSGSEDPGVAS. A helical transmembrane segment spans residues 216 to 243; sequence YMVTLLLTCCILPLSVIIICYIFVWNAI. At 244-265 the chain is on the cytoplasmic side; sequence HQVAQQQKDSESTQKAEKEVSR. Residues 266–289 form a helical membrane-spanning segment; that stretch reads MVVVMILAFILCWGPYASFATFSA. At 290 to 297 the chain is on the extracellular side; it reads LNPGYAWH. The helical transmembrane segment at 298 to 322 threads the bilayer; it reads PLAAALPAYFAKSATIYNPIIYVFM. Position 309 is an N6-(retinylidene)lysine (lysine 309). Topologically, residues 323-355 are cytoplasmic; the sequence is NRQFRSCIMQLFGKKVEDASEVSGSTTEVSTAS.

Belongs to the G-protein coupled receptor 1 family. Opsin subfamily. The color pigments are found in the cone photoreceptor cells.

The protein localises to the membrane. In terms of biological role, visual pigments are the light-absorbing molecules that mediate vision. They consist of an apoprotein, opsin, covalently linked to cis-retinal. The chain is Green-sensitive opsin-1 (G103) from Psalidodon fasciatus (Banded astyanax).